Here is a 413-residue protein sequence, read N- to C-terminus: ATP-dependent (S)-NAD(P)H-hydrate dehydratase (413 aa).

Positions 98-402 constitute a YjeF C-terminal domain; sequence NLNHFLSYVP…KSVPNALVWG (305 aa). Residues Gly199 and 252–258 each bind (6S)-NADPHX; that span reads NFVEYRA. Residues 292–296 and 311–320 contribute to the ATP site; these read KGQED and GMPRRCGGQG. Asp321 contributes to the (6S)-NADPHX binding site.

It belongs to the NnrD/CARKD family. Mg(2+) serves as cofactor.

The catalysed reaction is (6S)-NADHX + ATP = ADP + phosphate + NADH + H(+). It catalyses the reaction (6S)-NADPHX + ATP = ADP + phosphate + NADPH + H(+). In terms of biological role, catalyzes the dehydration of the S-form of NAD(P)HX at the expense of ATP, which is converted to ADP. Together with NAD(P)HX epimerase, which catalyzes the epimerization of the S- and R-forms, the enzyme allows the repair of both epimers of NAD(P)HX, a damaged form of NAD(P)H that is a result of enzymatic or heat-dependent hydration. The chain is ATP-dependent (S)-NAD(P)H-hydrate dehydratase from Heterostelium pallidum (strain ATCC 26659 / Pp 5 / PN500) (Cellular slime mold).